Here is a 2200-residue protein sequence, read N- to C-terminus: Bromodomain and WD repeat-containing DDB_G0285837 (2200 aa).

3 disordered regions span residues 137 to 178 (GFND…SNTN), 194 to 245 (VTPT…TTPP), and 259 to 288 (DIQQ…NNNN). Low complexity-rich tracts occupy residues 161–176 (NNNN…SNSN), 203–242 (NTTN…TTLT), and 259–273 (DIQQ…QQQQ). WD repeat units lie at residues 352–391 (GHKA…LIAT), 394–433 (GHLG…YDSI), 442–483 (SVNN…HVIS), 548–586 (GKTN…PKLV), 591–630 (GHPT…KWDH), 653–691 (RSKA…FHLE), 694–736 (EHTS…KKFV), and 741–780 (GFQC…DINN). Acidic residues-rich tracts occupy residues 918 to 933 (DDEI…EDFN) and 955 to 968 (QDDD…EDYD). 4 disordered regions span residues 918-1180 (DDEI…NHLT), 1262-1297 (NNNN…DDDD), 1461-1538 (ENNQ…NNNN), and 1662-1703 (NFNS…NNNN). The segment covering 974–1000 (MSTRKKSKIKADKRKKRLLKQSKKFTR) has biased composition (basic residues). Acidic residues predominate over residues 1052-1074 (GEIEMDDDDQYLNDNILDSDDND). Residues 1109-1132 (SSDNSSENDSSANGSDSDYSGSKS) are compositionally biased toward low complexity. A compositionally biased stretch (basic residues) spans 1133–1164 (NKNKRGDKSKRNKKGKKNVKNKKVQKRGRKKS). Composition is skewed to low complexity over residues 1262–1292 (NNNN…QQIN) and 1461–1525 (ENNQ…NSLN). One can recognise a Bromo domain in the interval 1722-1823 (EKIENLKKEM…HRISDILKEA (102 aa)). A disordered region spans residues 1850-2200 (DKDDSQLDDE…RGRGRPPKSN (351 aa)). A compositionally biased stretch (low complexity) spans 1878 to 1888 (LANNNHGNNKS). Residues 1910–1920 (TGKNITRSLLS) are compositionally biased toward polar residues. Positions 1945 to 1958 (TTTTTTTTTTTSST) are enriched in low complexity. 3 stretches are compositionally biased toward acidic residues: residues 2016–2028 (DYND…DNDG), 2057–2073 (EDED…EEDY), and 2104–2113 (SEEEEDEDQS). The span at 2114–2124 (DVNSNNNSDNE) shows a compositional bias: low complexity. Residues 2125–2138 (SGGEDGYSGEDGSE) show a composition bias toward acidic residues. Residues 2170 to 2185 (SFKNNNNNNNINNNVN) show a composition bias toward low complexity. Basic residues predominate over residues 2190-2200 (KRGRGRPPKSN).

This is Bromodomain and WD repeat-containing DDB_G0285837 from Dictyostelium discoideum (Social amoeba).